The following is a 641-amino-acid chain: Chaperone protein DnaK (641 aa).

T199 carries the phosphothreonine; by autocatalysis modification. Basic and acidic residues predominate over residues 577-590 (KGDNKDEIETRTQK). The segment at 577-641 (KGDNKDEIET…EFEEVDDKKK (65 aa)) is disordered. The segment covering 617 to 626 (GAEQASAQQD) has biased composition (low complexity). The span at 627-641 (DVVDAEFEEVDDKKK) shows a compositional bias: acidic residues.

Belongs to the heat shock protein 70 family.

Functionally, acts as a chaperone. In Thioalkalivibrio sulfidiphilus (strain HL-EbGR7), this protein is Chaperone protein DnaK.